The primary structure comprises 433 residues: 3-phosphoshikimate 1-carboxyvinyltransferase (433 aa).

The 3-phosphoshikimate site is built by Lys23, Ser24, and Arg28. Position 23 (Lys23) interacts with phosphoenolpyruvate. Phosphoenolpyruvate contacts are provided by Gly95 and Arg123. The 3-phosphoshikimate site is built by Ser167, Gln169, Asp317, and Lys344. A phosphoenolpyruvate-binding site is contributed by Gln169. The active-site Proton acceptor is the Asp317. Positions 348 and 390 each coordinate phosphoenolpyruvate.

It belongs to the EPSP synthase family. In terms of assembly, monomer.

The protein resides in the cytoplasm. The catalysed reaction is 3-phosphoshikimate + phosphoenolpyruvate = 5-O-(1-carboxyvinyl)-3-phosphoshikimate + phosphate. It functions in the pathway metabolic intermediate biosynthesis; chorismate biosynthesis; chorismate from D-erythrose 4-phosphate and phosphoenolpyruvate: step 6/7. Functionally, catalyzes the transfer of the enolpyruvyl moiety of phosphoenolpyruvate (PEP) to the 5-hydroxyl of shikimate-3-phosphate (S3P) to produce enolpyruvyl shikimate-3-phosphate and inorganic phosphate. The polypeptide is 3-phosphoshikimate 1-carboxyvinyltransferase (Staphylococcus epidermidis (strain ATCC 12228 / FDA PCI 1200)).